Reading from the N-terminus, the 555-residue chain is AP2-like ethylene-responsive transcription factor ANT (555 aa).

2 disordered regions span residues 34–56 and 199–231; these read GGREAIYSSSTSSAATSSSSVPP and LSMSPGSQSSCITGSHHHQQNQNQNHQSQNHQQ. 3 stretches are compositionally biased toward low complexity: residues 41 to 53, 199 to 208, and 218 to 231; these read SSSTSSAATSSSS, LSMSPGSQSS, and QNQNQNHQSQNHQQ. 2 consecutive DNA-binding regions (AP2/ERF) follow at residues 283 to 349 and 385 to 443; these read QYRG…TNFS and IYRG…TNFD.

The protein belongs to the AP2/ERF transcription factor family. AP2 subfamily. Interacts with ANL2, HDG2 and HDG10, and possibly with GL2, HDG3, HDG8, ATML1 and PDF2. In terms of tissue distribution, mostly expressed in developing flowers. Also present in mature flowers, siliques and seedlings, but not in mature roots, leaves and stems. Expressed in ovules and in vegetative and floral primordia.

Its subcellular location is the nucleus. Its function is as follows. Transcription activator that recognizes and binds to the DNA consensus sequence 5'-CAC[AG]N[AT]TNCCNANG-3'. Required for the initiation and growth of ovules integumenta, and for the development of female gametophyte. Plays a critical role in the development of gynoecium marginal tissues (e.g. stigma, style and septa), and in the fusion of carpels and of medial ridges leading to ovule primordia. Also involved in organs initiation and development, including floral organs. Maintains the meristematic competence of cells and consequently sustains expression of cell cycle regulators during organogenesis, thus controlling the final size of each organ by controlling their cell number. Regulates INO autoinduction and expression pattern. As ANT promotes petal cell identity and mediates down-regulation of AG in flower whorl 2, it functions as a class A homeotic gene. This chain is AP2-like ethylene-responsive transcription factor ANT, found in Arabidopsis thaliana (Mouse-ear cress).